The sequence spans 122 residues: Crustacean hyperglycemic hormones 5 (122 aa).

An N-terminal signal peptide occupies residues 1 to 26; that stretch reads MSLGLIASRLVAVALVVVVACSTTWA. 3 cysteine pairs are disulfide-bonded: cysteine 55/cysteine 91, cysteine 71/cysteine 87, and cysteine 74/cysteine 100. At valine 120 the chain carries Valine amide.

The protein belongs to the arthropod CHH/MIH/GIH/VIH hormone family.

It is found in the secreted. Hormone found in the sinus gland of isopods and decapods which controls the blood sugar level. Has a secretagogue action over the amylase released from the midgut gland. May act as a stress hormone and may be involved in the control of molting and reproduction. The chain is Crustacean hyperglycemic hormones 5 (CHH5) from Penaeus monodon (Giant tiger prawn).